The sequence spans 435 residues: Gamma-glutamyl phosphate reductase (435 aa).

The protein belongs to the gamma-glutamyl phosphate reductase family.

Its subcellular location is the cytoplasm. The catalysed reaction is L-glutamate 5-semialdehyde + phosphate + NADP(+) = L-glutamyl 5-phosphate + NADPH + H(+). It participates in amino-acid biosynthesis; L-proline biosynthesis; L-glutamate 5-semialdehyde from L-glutamate: step 2/2. In terms of biological role, catalyzes the NADPH-dependent reduction of L-glutamate 5-phosphate into L-glutamate 5-semialdehyde and phosphate. The product spontaneously undergoes cyclization to form 1-pyrroline-5-carboxylate. This is Gamma-glutamyl phosphate reductase from Synechococcus sp. (strain WH7803).